Consider the following 87-residue polypeptide: Citrate lyase acyl carrier protein (87 aa).

Serine 14 carries the O-(phosphoribosyl dephospho-coenzyme A)serine modification.

Belongs to the CitD family. Oligomer with a subunit composition of (alpha,beta,gamma)6.

The protein resides in the cytoplasm. Functionally, covalent carrier of the coenzyme of citrate lyase. This Treponema denticola (strain ATCC 35405 / DSM 14222 / CIP 103919 / JCM 8153 / KCTC 15104) protein is Citrate lyase acyl carrier protein.